The primary structure comprises 549 residues: Cytoplasmic trehalase (549 aa).

Substrate-binding positions include Arg168, Trp175–Asp176, Asn212, Arg221–Gln223, Arg292–Glu294, and Gly324. Catalysis depends on proton donor/acceptor residues Asp326 and Glu509. Substrate is bound at residue Glu525.

This sequence belongs to the glycosyl hydrolase 37 family. As to quaternary structure, monomer.

The protein localises to the cytoplasm. It carries out the reaction alpha,alpha-trehalose + H2O = alpha-D-glucose + beta-D-glucose. The protein operates within glycan degradation; trehalose degradation; D-glucose from alpha,alpha-trehalose: step 1/1. Functionally, hydrolyzes trehalose to glucose. Could be involved, in cells returning to low osmolarity conditions, in the utilization of the accumulated cytoplasmic trehalose, which was synthesized in response to high osmolarity. This is Cytoplasmic trehalase from Salmonella choleraesuis (strain SC-B67).